Here is a 1091-residue protein sequence, read N- to C-terminus: MCRRKPDIMILTQIEAKEACDWLRATGFPQYAQLYEDLLFPIDISSVKREHDFLDRDAIEALCRRLNTLNKCAVMKLEISPHRKRSEDSDEDEPCAISGKWTFQRDSKRWSRLEEFDVFSSKLDPAPGAPAEAPLKTAASHESMLTELSERQEVASVLSLSSTGSLPVHAPHAGDAATPRTNSVISVCSSGHFVGNDDSFCSLPSPKELSSFSFSMKGQEKNAKSKTRSLLKRMESLKLRGSPHSKHKAPSKLGLIISGPILQEGMDEEKLKQLNCVEISALNGNRINVPAVRKRSVSNSTQTSSSSSQSETSSAVSTPSPVTRTRSLSACNKRVGMYLEGFDPFNQSTFNNVMEQNCKNRESYPEDTVFYIPEDHKPGTFPKALSNGSFPPSGNNSSVNWRTGSFHGPGHISLRRENSSDSPKELKRRNSSSSMSSRLSIYDNVPGSILYSSSGDLADLENEDIFPELDDILYHVKGMQRIVNQWSEKFSDEGDSDSALDSVSPCPSSPKQIHLDVDNDRATPSDLDSTGNSLNEPEEPSDIPERRDSGVGASLTRSNRHRLRWHSFQSSHRPSLNSVSLQINCQSVAQMNLLQKYSLLKLTALLEKYTPSNKHGFSWAVPKFMKRIKVPDYKDRNVFGVPLTVNVQRTGQPLPQSIQQAMRYLRNHCLDQVGLFRKSGVKSRIQALRQMNESAIDCVNYEGQSAYDVADMLKQYFRDLPEPLMTNKLSETFLQIYQCVPKDQRLQAMKAAIMLLPDENREVLQTLLYFLSDVTAAVKENQMTPTNLAVCLAPSLFHLNTLKRENSSPRVMQRKQSLGKPDQKDLNENLAATQGLAHMIAECKKLFQVPEEMSRCRNSYTEQELKPLTLEALGRLRNDESADYQHFLQDCVDSLFKEVKEKFKGWVSYSTSEQAELSYKKVSEGPPLRLWRSTIEVPAMPEEILKRLLKEQHLWDVDLLDSKVIEILDSQTEIYQYVQNSMAPHPARDYVVLRTWRTNLPKGACALLLTSVDHDRAPVVGVRVNVLLSRYLIEPCGSGKSKLTYMCRADLRGHMPEWYTKSFGHLCAAEVVKIRDSFSNQNTETKDTKSR.

Positions 11–78 (LTQIEAKEAC…LNKCAVMKLE (68 aa)) constitute an SAM domain. 3 positions are modified to phosphoserine: Ser86, Ser89, and Ser320. Residues 273 to 447 (QLNCVEISAL…RLSIYDNVPG (175 aa)) are focal adhesion-targeting (FAT). Disordered stretches follow at residues 292 to 327 (VRKRSVSNSTQTSSSSSQSETSSAVSTPSPVTRTRS), 382 to 439 (PKAL…SSRL), and 491 to 553 (SDEG…GVGA). Low complexity-rich tracts occupy residues 297-323 (VSNSTQTSSSSSQSETSSAVSTPSPVT) and 386-400 (SNGSFPPSGNNSSVN). Over residues 414–425 (LRRENSSDSPKE) the composition is skewed to basic and acidic residues. Over residues 499 to 511 (ALDSVSPCPSSPK) the composition is skewed to polar residues. Positions 513–523 (IHLDVDNDRAT) are enriched in basic and acidic residues. Residues 526 to 535 (DLDSTGNSLN) are compositionally biased toward polar residues. The tract at residues 614–636 (KHGFSWAVPKFMKRIKVPDYKDR) is polybasic cluster (PBR). In terms of domain architecture, Rho-GAP spans 641–847 (VPLTVNVQRT…HMIAECKKLF (207 aa)). Residues 877 to 1084 (RNDESADYQH…RDSFSNQNTE (208 aa)) form the START domain.

Interacts with EF1A1, facilitates EF1A1 distribution to the membrane periphery and ruffles upon growth factor stimulation and suppresses cell migration. Interacts with tensin TNS1 (via N-terminus); the interaction is decreased by phosphorylation of TNS1. Interacts with TNS3 and PTEN; in resting cells, interacts with TNS3 (via C2 tensin-type domain) but, following growth factor stimulation, TNS3 and PTEN are phosphorylated which leads to weakened interaction with TNS3 and enhanced interaction with PTEN. Interacts (via C-terminus) with tensin TNS4 (via SH2 domain); the interaction is independent of tyrosine phosphorylation of DLC1.

Its subcellular location is the cytoplasm. The protein resides in the cell junction. It localises to the focal adhesion. It is found in the membrane. Functions as a GTPase-activating protein for the small GTPases RHOA, RHOB, RHOC and CDC42, terminating their downstream signaling. This induces morphological changes and detachment through cytoskeletal reorganization, playing a critical role in biological processes such as cell migration and proliferation. Also functions in vivo as an activator of the phospholipase PLCD1. Active DLC1 increases cell migration velocity but reduces directionality. Required for growth factor-induced epithelial cell migration; in resting cells, interacts with TNS3 while PTEN interacts with the p85 regulatory subunit of the PI3K kinase complex but growth factor stimulation induces phosphorylation of TNS3 and PTEN, causing them to change their binding preference so that PTEN interacts with DLC1 and TNS3 interacts with p85. The PTEN-DLC1 complex translocates to the posterior of migrating cells to activate RHOA while the TNS3-p85 complex translocates to the leading edge of migrating cells to promote RAC1 activation. This is Rho GTPase-activating protein 7 (DLC1) from Canis lupus familiaris (Dog).